The primary structure comprises 627 residues: MTFRQPARRTLSGRFGALKCHNGGCSCDSKAMENDILRQSDPEKLHRIRHSTSHILAMAVQKLFPETKVTIGPAIENGFYYDFDRPTPFTPEDLKKIEKEMRRIVQQKLPLVREEVPREAMRERLEALGEPYKLELFEGFDHDAPVSLYRTGDWWDLCAGPHVESTAEIHPNAFKLRSVAGAYWRGDEKRAQLQRIYGTAWETPEQLEEFLRREEEAKKRDHRKLGRELGLFVFSDLVGPGLPLWTPKGALLRYILEEFLRKEQVKRGYQQVVTPHIARVDLFKTSGHWFKYKDDMFPLMATSEEEGAEEGFVMKPMNCPFHIQIYKSELHSYRELPIRLAEFGTVYRYEQSGELGGLTRVRGFTVDDSHLFVTPEQLDDEFKKVVDLIQFVFRSLQLGDGFSARLSFRDPTSDKYIGSDAAWEKAQAAILKASQDLGLKYFVAEGEAAFYGPKLDFIFRDALGREWQLGTVQVDYILPERFELEYVAEDGSRRRPVMIHRAPFGSLERFIAILIEHFAGDFPLWLAPEQVRILPVTDQFVGYAESVKDRLVSLEMRAEVDASSERLGKKIRNGETAKVPVLLVVGESEANSGTVAVRTRVEGEKDKGTLPVEEAIAYLQERLAKRT.

The tract at residues 221-523 (DHRKLGRELG…LIEHFAGDFP (303 aa)) is catalytic. Residues Cys-319, His-370, and His-500 each coordinate Zn(2+).

The protein belongs to the class-II aminoacyl-tRNA synthetase family. As to quaternary structure, homodimer. It depends on Zn(2+) as a cofactor.

The protein resides in the cytoplasm. It carries out the reaction tRNA(Thr) + L-threonine + ATP = L-threonyl-tRNA(Thr) + AMP + diphosphate + H(+). Catalyzes the attachment of threonine to tRNA(Thr) in a two-step reaction: L-threonine is first activated by ATP to form Thr-AMP and then transferred to the acceptor end of tRNA(Thr). Also edits incorrectly charged L-seryl-tRNA(Thr). This is Threonine--tRNA ligase from Gloeobacter violaceus (strain ATCC 29082 / PCC 7421).